Consider the following 166-residue polypeptide: Large ribosomal subunit protein uL10 (166 aa).

It belongs to the universal ribosomal protein uL10 family. Part of the ribosomal stalk of the 50S ribosomal subunit. The N-terminus interacts with L11 and the large rRNA to form the base of the stalk. The C-terminus forms an elongated spine to which L12 dimers bind in a sequential fashion forming a multimeric L10(L12)X complex.

Functionally, forms part of the ribosomal stalk, playing a central role in the interaction of the ribosome with GTP-bound translation factors. The protein is Large ribosomal subunit protein uL10 of Pseudomonas putida (strain W619).